A 439-amino-acid chain; its full sequence is Adenylosuccinate synthetase (439 aa).

Residues 25-31 (GDEGKGK), 53-55 (GHT), and Lys-62 each bind GTP. Asp-26 (proton acceptor) is an active-site residue. Residues Asp-26 and Gly-53 each coordinate Mg(2+). IMP-binding positions include 26–29 (DEGK) and 51–54 (NAGH). Catalysis depends on His-54, which acts as the Proton donor. Positions 141, 155, 232, and 247 each coordinate IMP. Thr-307 lines the GTP pocket. 307–313 (TTTNRPR) contacts substrate. Arg-311 provides a ligand contact to IMP. GTP-binding positions include Arg-313, 339-341 (KLD), and 425-427 (GVG).

This sequence belongs to the adenylosuccinate synthetase family. Homodimer. It depends on Mg(2+) as a cofactor.

Its subcellular location is the cytoplasm. The enzyme catalyses IMP + L-aspartate + GTP = N(6)-(1,2-dicarboxyethyl)-AMP + GDP + phosphate + 2 H(+). Its pathway is purine metabolism; AMP biosynthesis via de novo pathway; AMP from IMP: step 1/2. In terms of biological role, plays an important role in the salvage pathway for purine nucleotide biosynthesis. Catalyzes the first committed step in the biosynthesis of AMP from IMP. The protein is Adenylosuccinate synthetase of Plasmodium yoelii yoelii.